Reading from the N-terminus, the 230-residue chain is Cysteine S-methyltransferase OspZ (230 aa).

Residues 49 to 52 form an interaction with host proteins TAB2, TAB3 and ZRANB3 region; the sequence is GITR. Alanine 92, serine 98, arginine 107, glutamine 111, tyrosine 204, and glutamate 208 together coordinate S-adenosyl-L-methionine.

Belongs to the NleE/OspZ family. As to quaternary structure, monomer.

It localises to the secreted. The protein localises to the host cytoplasm. Its subcellular location is the host nucleus. It catalyses the reaction L-cysteinyl-[protein] + S-adenosyl-L-methionine = S-methyl-L-cysteinyl-[protein] + S-adenosyl-L-homocysteine + H(+). Its function is as follows. Cysteine methyltransferase effector that inhibits host cell NF-kappa-B activation by preventing nuclear translocation of host protein RELA/p65. Acts by mediating cysteine methylation of host proteins TAB2 and TAB3: methylation of a conserved cysteine residue of the RanBP2-type zinc finger (NZF) of TAB2 and TAB3 disrupts zinc-binding, thereby inactivating the ubiquitin chain-binding activity of TAB2 and TAB3, leading to NF-kappa-B inactivation. Also mediates cysteine methylation of host protein ZRANB3, inactivating its ability to bind ubiquitin chains. This Shigella flexneri protein is Cysteine S-methyltransferase OspZ.